We begin with the raw amino-acid sequence, 340 residues long: Dof zinc finger protein DOF2.2 (340 aa).

Residues 12-33 (PPINWPQSANPNNHPHHHQLQE) form a disordered region. Residues 94–148 (LKCPRCDSANTKFCYFNNYNLTQPRHFCKACRRYWTRGGALRNVPVGGGCRRNKK) form a Dof-type zinc finger. Residues cysteine 96, cysteine 99, cysteine 121, and cysteine 124 each contribute to the Zn(2+) site. Disordered stretches follow at residues 138-180 (PVGG…TSNV) and 301-340 (GNIS…QHLM). The segment covering 151-165 (SGNSKSSSSSQNKQS) has biased composition (low complexity). 2 stretches are compositionally biased toward polar residues: residues 166–180 (TSMV…TSNV) and 309–331 (GLTS…GSSS).

It is found in the nucleus. In terms of biological role, transcription factor that binds specifically to a 5'-AA[AG]G-3' consensus core sequence. This chain is Dof zinc finger protein DOF2.2 (DOF2.2), found in Arabidopsis thaliana (Mouse-ear cress).